The following is a 380-amino-acid chain: Cytochrome b (380 aa).

Transmembrane regions (helical) follow at residues 34-54 (FGSL…LLAM), 78-99 (WLIR…YLHI), 114-134 (WNTG…GYVL), and 179-199 (FFAL…IHLT). The heme b site is built by His84 and His98. Residues His183 and His197 each coordinate heme b. His202 is a binding site for a ubiquinone. 4 consecutive transmembrane segments (helical) span residues 227–247 (LKDF…ALFT), 289–309 (LGGV…PFLH), 321–341 (LSQT…WIGS), and 348–368 (FITI…ILFP).

Belongs to the cytochrome b family. As to quaternary structure, the cytochrome bc1 complex contains 11 subunits: 3 respiratory subunits (MT-CYB, CYC1 and UQCRFS1), 2 core proteins (UQCRC1 and UQCRC2) and 6 low-molecular weight proteins (UQCRH/QCR6, UQCRB/QCR7, UQCRQ/QCR8, UQCR10/QCR9, UQCR11/QCR10 and a cleavage product of UQCRFS1). This cytochrome bc1 complex then forms a dimer. Heme b serves as cofactor.

It localises to the mitochondrion inner membrane. Its function is as follows. Component of the ubiquinol-cytochrome c reductase complex (complex III or cytochrome b-c1 complex) that is part of the mitochondrial respiratory chain. The b-c1 complex mediates electron transfer from ubiquinol to cytochrome c. Contributes to the generation of a proton gradient across the mitochondrial membrane that is then used for ATP synthesis. This Coracias caudatus (Lilac-breasted roller) protein is Cytochrome b (MT-CYB).